A 261-amino-acid polypeptide reads, in one-letter code: Polycomb group RING finger protein 1 (261 aa).

The RING-type zinc finger occupies 45 to 84 (CYLCAGYFIDATTITECLHTFCKSCIVKYLQTSKYCPMCN).

In terms of assembly, component of a PRC1-like complex.

It is found in the nucleus. Component of a Polycomb group (PcG) multiprotein PRC1-like complex, a complex class required to maintain the transcriptionally repressive state of many genes, including Hox genes, throughout development. PcG PRC1 complex acts via chromatin remodeling and modification of histones; it mediates monoubiquitination of histone H2A 'Lys-119', rendering chromatin heritably changed in its expressibility. This chain is Polycomb group RING finger protein 1 (pcgf1), found in Danio rerio (Zebrafish).